A 569-amino-acid chain; its full sequence is Aspartate--tRNA ligase, cytoplasmic 2 (569 aa).

The disordered stretch occupies residues 1-23 (MSEENNHKEKSKNEIKKEKKKIE). The segment at 292 to 295 (QFYR) is aspartate. Position 314 (arginine 314) interacts with L-aspartate. ATP contacts are provided by residues 314 to 316 (RTD) and 322 to 324 (RHL). L-aspartate-binding residues include serine 475 and arginine 479. 540-543 (GLER) is an ATP binding site.

The protein belongs to the class-II aminoacyl-tRNA synthetase family. Type 2 subfamily.

The protein localises to the cytoplasm. The catalysed reaction is tRNA(Asp) + L-aspartate + ATP = L-aspartyl-tRNA(Asp) + AMP + diphosphate. The polypeptide is Aspartate--tRNA ligase, cytoplasmic 2 (aspS2) (Dictyostelium discoideum (Social amoeba)).